The following is a 427-amino-acid chain: 3-phosphoshikimate 1-carboxyvinyltransferase (427 aa).

3-phosphoshikimate is bound by residues Lys22, Ser23, and Arg27. Lys22 is a phosphoenolpyruvate binding site. Phosphoenolpyruvate contacts are provided by Gly96 and Arg124. Residues Ser169, Ser170, Gln171, Ser197, Asp313, Asn336, and Lys340 each contribute to the 3-phosphoshikimate site. A phosphoenolpyruvate-binding site is contributed by Gln171. Residue Asp313 is the Proton acceptor of the active site. Positions 344, 386, and 411 each coordinate phosphoenolpyruvate.

This sequence belongs to the EPSP synthase family. Monomer.

The protein localises to the cytoplasm. The catalysed reaction is 3-phosphoshikimate + phosphoenolpyruvate = 5-O-(1-carboxyvinyl)-3-phosphoshikimate + phosphate. It participates in metabolic intermediate biosynthesis; chorismate biosynthesis; chorismate from D-erythrose 4-phosphate and phosphoenolpyruvate: step 6/7. In terms of biological role, catalyzes the transfer of the enolpyruvyl moiety of phosphoenolpyruvate (PEP) to the 5-hydroxyl of shikimate-3-phosphate (S3P) to produce enolpyruvyl shikimate-3-phosphate and inorganic phosphate. This is 3-phosphoshikimate 1-carboxyvinyltransferase from Shigella sonnei.